The primary structure comprises 334 residues: Ketol-acid reductoisomerase (NADP(+)) (334 aa).

The 181-residue stretch at 3–183 (ATIYYENDAD…GGTRGGVIET (181 aa)) folds into the KARI N-terminal Rossmann domain. Residues 26-29 (YGSQ), Arg-49, Ser-52, and 84-87 (DEVQ) contribute to the NADP(+) site. The active site involves His-109. An NADP(+)-binding site is contributed by Gly-135. A KARI C-terminal knotted domain is found at 184–329 (TFAEETETDL…LGLRRMMNWI (146 aa)). Residues Asp-192, Glu-196, Glu-228, and Glu-232 each contribute to the Mg(2+) site. Ser-253 serves as a coordination point for substrate.

The protein belongs to the ketol-acid reductoisomerase family. Mg(2+) is required as a cofactor.

The enzyme catalyses (2R)-2,3-dihydroxy-3-methylbutanoate + NADP(+) = (2S)-2-acetolactate + NADPH + H(+). It catalyses the reaction (2R,3R)-2,3-dihydroxy-3-methylpentanoate + NADP(+) = (S)-2-ethyl-2-hydroxy-3-oxobutanoate + NADPH + H(+). It participates in amino-acid biosynthesis; L-isoleucine biosynthesis; L-isoleucine from 2-oxobutanoate: step 2/4. The protein operates within amino-acid biosynthesis; L-valine biosynthesis; L-valine from pyruvate: step 2/4. In terms of biological role, involved in the biosynthesis of branched-chain amino acids (BCAA). Catalyzes an alkyl-migration followed by a ketol-acid reduction of (S)-2-acetolactate (S2AL) to yield (R)-2,3-dihydroxy-isovalerate. In the isomerase reaction, S2AL is rearranged via a Mg-dependent methyl migration to produce 3-hydroxy-3-methyl-2-ketobutyrate (HMKB). In the reductase reaction, this 2-ketoacid undergoes a metal-dependent reduction by NADPH to yield (R)-2,3-dihydroxy-isovalerate. In Rhodopirellula baltica (strain DSM 10527 / NCIMB 13988 / SH1), this protein is Ketol-acid reductoisomerase (NADP(+)).